Consider the following 273-residue polypeptide: WAP four-disulfide core domain protein 8 (273 aa).

A helical membrane pass occupies residues 45–65 (LAHSWWSGALLLLLLFLFLSL). The WAP 1 domain occupies 76–123 (IKQKVGECPRQRLECRNESLSSCKTDFNCKAHFKCCQFACGRKCMDPY). Cystine bridges form between C83–C111, C90–C115, C98–C110, C104–C119, C127–C177, C136–C160, C152–C173, C186–C214, C197–C218, C201–C213, C207–C222, C233–C261, C240–C264, C248–C260, and C254–C268. Residues 127–177 (CMLPSDKGNCQDILTRWYFDSQKHQCRAFLYSGCRGNANNFLTKTDCRNAC) enclose the BPTI/Kunitz inhibitor domain. WAP domains follow at residues 179 to 226 (FVEK…ARVW) and 228 to 272 (VKTG…LKPR).

It is found in the membrane. This chain is WAP four-disulfide core domain protein 8 (Wfdc8), found in Mus musculus (Mouse).